We begin with the raw amino-acid sequence, 146 residues long: Phospholipase A2, membrane associated (146 aa).

Positions 1 to 21 (MKVLLLLAVVIMAFGSIQVQG) are cleaved as a signal peptide. Disulfide bonds link C47-C139, C49-C65, C64-C119, C70-C146, C71-C112, C80-C105, and C98-C110. Positions 48, 50, and 52 each coordinate Ca(2+). H68 is a catalytic residue. D69 contacts Ca(2+). Residue D113 is part of the active site.

It belongs to the phospholipase A2 family. The cofactor is Ca(2+).

It localises to the secreted. The protein localises to the cell membrane. The protein resides in the mitochondrion outer membrane. It catalyses the reaction a 1,2-diacyl-sn-glycero-3-phosphoethanolamine + H2O = a 1-acyl-sn-glycero-3-phosphoethanolamine + a fatty acid + H(+). It carries out the reaction 1-hexadecanoyl-2-(9Z-octadecenoyl)-sn-glycero-3-phosphoethanolamine + H2O = 1-hexadecanoyl-sn-glycero-3-phosphoethanolamine + (9Z)-octadecenoate + H(+). The catalysed reaction is 1-hexadecanoyl-2-(9Z,12Z-octadecadienoyl)-sn-glycero-3-phosphoethanolamine + H2O = 1-hexadecanoyl-sn-glycero-3-phosphoethanolamine + (9Z,12Z)-octadecadienoate + H(+). The enzyme catalyses 1-hexadecanoyl-2-(5Z,8Z,11Z,14Z-eicosatetraenoyl)-sn-glycero-3-phosphoethanolamine + H2O = 1-hexadecanoyl-sn-glycero-3-phosphoethanolamine + (5Z,8Z,11Z,14Z)-eicosatetraenoate + H(+). It catalyses the reaction N-hexadecanoyl-1,2-di-(9Z-octadecenoyl)-sn-glycero-3-phosphoethanolamine + H2O = N-hexadecanoyl-1-(9Z-octadecenoyl)-sn-glycero-3-phosphoethanolamine + (9Z)-octadecenoate + H(+). It carries out the reaction 1,2-dihexadecanoyl-sn-glycero-3-phospho-(1'-sn-glycerol) + H2O = 1-hexadecanoyl-sn-glycero-3-phospho-(1'-sn-glycerol) + hexadecanoate + H(+). The catalysed reaction is 1-hexadecanoyl-2-(9Z-octadecenoyl)-sn-glycero-3-phosphoglycerol + H2O = 1-hexadecanoyl-sn-glycero-3-phosphoglycerol + (9Z)-octadecenoate + H(+). The enzyme catalyses 1-hexadecanoyl-2-(9Z-octadecenoyl)-sn-glycero-3-phospho-(1'-sn-glycerol) + H2O = 1-hexadecanoyl-sn-glycero-3-phospho-(1'-sn-glycerol) + (9Z)-octadecenoate + H(+). It catalyses the reaction a 1,2-diacyl-sn-glycero-3-phosphocholine + H2O = a 1-acyl-sn-glycero-3-phosphocholine + a fatty acid + H(+). It carries out the reaction 1,2-dihexadecanoyl-sn-glycero-3-phosphocholine + H2O = 1-hexadecanoyl-sn-glycero-3-phosphocholine + hexadecanoate + H(+). The catalysed reaction is 1-hexadecanoyl-2-(9Z-octadecenoyl)-sn-glycero-3-phosphocholine + H2O = 1-hexadecanoyl-sn-glycero-3-phosphocholine + (9Z)-octadecenoate + H(+). The enzyme catalyses 1-hexadecanoyl-2-(9Z,12Z-octadecadienoyl)-sn-glycero-3-phosphocholine + H2O = (9Z,12Z)-octadecadienoate + 1-hexadecanoyl-sn-glycero-3-phosphocholine + H(+). It catalyses the reaction 1-hexadecanoyl-2-(4Z,7Z,10Z,13Z,16Z,19Z-docosahexaenoyl)-sn-glycero-3-phosphocholine + H2O = (4Z,7Z,10Z,13Z,16Z,19Z)-docosahexaenoate + 1-hexadecanoyl-sn-glycero-3-phosphocholine + H(+). Secretory calcium-dependent phospholipase A2 that primarily targets extracellular phospholipids with implications in host antimicrobial defense, inflammatory response and tissue regeneration. Hydrolyzes the ester bond of the fatty acyl group attached at sn-2 position of phospholipids (phospholipase A2 activity) with preference for phosphatidylethanolamines and phosphatidylglycerols over phosphatidylcholines. Contributes to lipid remodeling of cellular membranes and generation of lipid mediators involved in pathogen clearance. Displays bactericidal activity against Gram-positive bacteria by directly hydrolyzing phospholipids of the bacterial membrane. Upon sterile inflammation, targets membrane phospholipids of extracellular mitochondria released from activated platelets, generating free unsaturated fatty acids such as arachidonate that is used by neighboring leukocytes to synthesize inflammatory eicosanoids such as leukotrienes. Simultaneously, by compromising mitochondrial membrane integrity, promotes the release in circulation of potent damage-associated molecular pattern molecules that activate the innate immune response. Plays a stem cell regulator role in the intestinal crypt. Within intracellular compartment mediates Paneth cell differentiation and its stem cell supporting functions by inhibiting Wnt signaling pathway in intestinal stem cell (ICS). Secreted in the intestinal lumen upon inflammation, acts in an autocrine way and promotes prostaglandin E2 synthesis that stimulates Wnt signaling pathway in ICS cells and tissue regeneration. May play a role in the biosynthesis of N-acyl ethanolamines that regulate energy metabolism and inflammation. Hydrolyzes N-acyl phosphatidylethanolamines to N-acyl lysophosphatidylethanolamines, which are further cleaved by a lysophospholipase D to release N-acyl ethanolamines. Independent of its catalytic activity, acts as a ligand for integrins. Binds to and activates integrins ITGAV:ITGB3, ITGA4:ITGB1 and ITGA5:ITGB1. Binds to a site (site 2) which is distinct from the classical ligand-binding site (site 1) and induces integrin conformational changes and enhanced ligand binding to site 1. Induces cell proliferation in an integrin-dependent manner. The sequence is that of Phospholipase A2, membrane associated (Pla2g2a) from Rattus norvegicus (Rat).